Consider the following 410-residue polypeptide: 23S rRNA (uracil(747)-C(5))-methyltransferase (410 aa).

[4Fe-4S] cluster-binding residues include C61, C67, C70, and C137. S-adenosyl-L-methionine is bound by residues Q253, Y279, E300, and D341. The active-site Nucleophile is C367.

The protein belongs to the class I-like SAM-binding methyltransferase superfamily. RNA M5U methyltransferase family.

It carries out the reaction uridine(747) in 23S rRNA + S-adenosyl-L-methionine = 5-methyluridine(747) in 23S rRNA + S-adenosyl-L-homocysteine + H(+). Its activity is regulated as follows. Activated by magnesium ions. Functionally, catalyzes the formation of 5-methyl-uridine at position equivalent to 747 (m5U747) in 23S rRNA (m5U859 in the P.abyssi numbering). The chain is 23S rRNA (uracil(747)-C(5))-methyltransferase from Pyrococcus abyssi (strain GE5 / Orsay).